We begin with the raw amino-acid sequence, 131 residues long: UPF0146 protein PH0209 (131 aa).

The protein belongs to the UPF0146 family.

The protein is UPF0146 protein PH0209 of Pyrococcus horikoshii (strain ATCC 700860 / DSM 12428 / JCM 9974 / NBRC 100139 / OT-3).